Reading from the N-terminus, the 193-residue chain is Xanthine phosphoribosyltransferase (193 aa).

Xanthine contacts are provided by Leu-20 and Thr-27. Position 128–132 (128–132 (ANGQA)) interacts with 5-phospho-alpha-D-ribose 1-diphosphate. Lys-156 serves as a coordination point for xanthine.

Belongs to the purine/pyrimidine phosphoribosyltransferase family. Xpt subfamily. In terms of assembly, homodimer.

The protein localises to the cytoplasm. It carries out the reaction XMP + diphosphate = xanthine + 5-phospho-alpha-D-ribose 1-diphosphate. It participates in purine metabolism; XMP biosynthesis via salvage pathway; XMP from xanthine: step 1/1. In terms of biological role, converts the preformed base xanthine, a product of nucleic acid breakdown, to xanthosine 5'-monophosphate (XMP), so it can be reused for RNA or DNA synthesis. This is Xanthine phosphoribosyltransferase from Streptococcus equi subsp. zooepidemicus (strain H70).